Reading from the N-terminus, the 554-residue chain is Inactive serine/threonine-protein kinase/endoribonuclease IRE1-like (554 aa).

The N-terminal stretch at 1–17 is a signal peptide; it reads MWLLAISLVGLLVVVVC. Positions 36-85 are disordered; it reads KRDKNSAPRVSASGEDGTKNEQVEKKSDPSGGLGEENEKTNSESKVLSVP. Residues 51-63 show a composition bias toward basic and acidic residues; that stretch reads DGTKNEQVEKKSD. The Protein kinase domain occupies 121-408; that stretch reads LVSTNEMKYG…ATQVLLHPLF (288 aa). Lys150 is a binding site for ATP. The 144-residue stretch at 411 to 554 folds into the KEN domain; the sequence is SEKRLFFLRE…GEEAFEKYFN (144 aa).

The protein belongs to the protein kinase superfamily. Ser/Thr protein kinase family.

The protein is Inactive serine/threonine-protein kinase/endoribonuclease IRE1-like of Arabidopsis thaliana (Mouse-ear cress).